A 63-amino-acid chain; its full sequence is Large ribosomal subunit protein bL28 (63 aa).

It belongs to the bacterial ribosomal protein bL28 family.

In Desulforudis audaxviator (strain MP104C), this protein is Large ribosomal subunit protein bL28.